Consider the following 466-residue polypeptide: Mitochondrial-processing peptidase subunit beta (466 aa).

A Zn(2+)-binding site is contributed by His73. The active-site Proton acceptor is Glu76. Residues His77 and Glu153 each contribute to the Zn(2+) site.

This sequence belongs to the peptidase M16 family. In terms of assembly, heterodimer of mppA (alpha) and mppB (beta) subunits, forming the mitochondrial processing protease (MPP) in which mppA is involved in substrate recognition and binding and mppB is the catalytic subunit. Zn(2+) is required as a cofactor.

The protein localises to the mitochondrion matrix. The enzyme catalyses Release of N-terminal transit peptides from precursor proteins imported into the mitochondrion, typically with Arg in position P2.. Binding to mppA is required for catalytic activity. Its function is as follows. Catalytic subunit of the essential mitochondrial processing protease (MPP), which cleaves the mitochondrial sequence off newly imported precursors proteins. Preferentially, cleaves after an arginine at position P2. This chain is Mitochondrial-processing peptidase subunit beta (mppB), found in Lentinula edodes (Shiitake mushroom).